The primary structure comprises 247 residues: 3(1)-hydroxy-L-isoleucine 4-dioxygenase (247 aa).

Residues histidine 160, aspartate 162, and histidine 213 each contribute to the Fe cation site.

The protein belongs to the iron/ascorbate-dependent oxidoreductase family. L-ascorbate serves as cofactor. The cofactor is Fe(2+).

The catalysed reaction is 3(1)-hydroxy-L-isoleucine + 2-oxoglutarate + O2 = (4S)-3(1),4-dihydroxy-L-isoleucine + succinate + CO2. Functionally, catalyzes the hydroxylation of L-4'-hydroxyisoleucine (4'-HIL) at the C-4 position to form L-4,4'-dihydroxyisoleucine (4,4'-DIHIL). Together with HilA, catalyzes the two step conversion of L-isoleucine into L-4,4'-dihydroxyisoleucine. In vitro, in the absence of HilA, can also catalyze the oxidation of L-methionine and the C-4-hydroxylation of L-leucine and L-isoleucine. This is 3(1)-hydroxy-L-isoleucine 4-dioxygenase from Pantoea ananatis (strain AJ13355).